A 159-amino-acid chain; its full sequence is Pathogenesis-related leaf protein 4 (159 aa).

The N-terminal stretch at 1–24 is a signal peptide; that stretch reads MGLFNISLLLTCLMVLAIFHSCEA. Q25 bears the Pyrrolidone carboxylic acid mark. An SCP domain is found at 32–147; that stretch reads LAVHNDARAQ…NGWWFISCNY (116 aa). 3 disulfide bridges follow: C68-C136, C109-C115, and C131-C145.

This sequence belongs to the CRISP family.

Probably involved in the defense reaction of plants against pathogens. The sequence is that of Pathogenesis-related leaf protein 4 from Solanum lycopersicum (Tomato).